The following is a 398-amino-acid chain: Tryptophan synthase beta chain (398 aa).

K88 is modified (N6-(pyridoxal phosphate)lysine).

The protein belongs to the TrpB family. As to quaternary structure, tetramer of two alpha and two beta chains. It depends on pyridoxal 5'-phosphate as a cofactor.

The enzyme catalyses (1S,2R)-1-C-(indol-3-yl)glycerol 3-phosphate + L-serine = D-glyceraldehyde 3-phosphate + L-tryptophan + H2O. Its pathway is amino-acid biosynthesis; L-tryptophan biosynthesis; L-tryptophan from chorismate: step 5/5. Functionally, the beta subunit is responsible for the synthesis of L-tryptophan from indole and L-serine. The protein is Tryptophan synthase beta chain of Mannheimia succiniciproducens (strain KCTC 0769BP / MBEL55E).